The primary structure comprises 303 residues: MRVVVQGPGSLGSLVGGVLAGGETAVTLLGHQSEHLTRVREDGLRVVQPDGTTRVTRPSVATDPSVVADADLVVVCVKSYDTASAARALGRQCDGAMVLTLQNGLGNAAVLAEHVPADTVLVGTTTHGAARTEPGVVRHAGGGETTIGRYRGANDARVASVAAAFSTGGMETTVTASPQRAVWEKVLVNVGINAATALADVDNGALVECPPGERVLERAVTEGVRVAEAEGVSVSESVVERARQVAARTASNESSMRQDLAGGARTEVESLHGAVVERARDHDIAVPVIRTLADLVRLAQRDG.

NADP(+) is bound by residues 7–12, Lys-78, Asn-103, and Ala-129; that span reads GPGSLG. Catalysis depends on Lys-185, which acts as the Proton donor. Substrate-binding positions include Lys-185, Asn-189, Asn-193, Asn-203, and 252-255; that span reads NESS. Residue Glu-267 participates in NADP(+) binding.

It belongs to the ketopantoate reductase family.

It is found in the cytoplasm. It catalyses the reaction (R)-pantoate + NAD(+) = 2-dehydropantoate + NADH + H(+). The enzyme catalyses (R)-pantoate + NADP(+) = 2-dehydropantoate + NADPH + H(+). It participates in cofactor biosynthesis; coenzyme A biosynthesis. Functionally, catalyzes the NAD(P)H-dependent reduction of ketopantoate into pantoic acid. The chain is 2-dehydropantoate 2-reductase from Halobacterium salinarum (strain ATCC 700922 / JCM 11081 / NRC-1) (Halobacterium halobium).